Reading from the N-terminus, the 378-residue chain is Anhydro-N-acetylmuramic acid kinase (378 aa).

9–16 (GTSADGID) serves as a coordination point for ATP.

The protein belongs to the anhydro-N-acetylmuramic acid kinase family.

It catalyses the reaction 1,6-anhydro-N-acetyl-beta-muramate + ATP + H2O = N-acetyl-D-muramate 6-phosphate + ADP + H(+). It functions in the pathway amino-sugar metabolism; 1,6-anhydro-N-acetylmuramate degradation. Its pathway is cell wall biogenesis; peptidoglycan recycling. Functionally, catalyzes the specific phosphorylation of 1,6-anhydro-N-acetylmuramic acid (anhMurNAc) with the simultaneous cleavage of the 1,6-anhydro ring, generating MurNAc-6-P. Is required for the utilization of anhMurNAc either imported from the medium or derived from its own cell wall murein, and thus plays a role in cell wall recycling. The polypeptide is Anhydro-N-acetylmuramic acid kinase (Synechococcus sp. (strain ATCC 27144 / PCC 6301 / SAUG 1402/1) (Anacystis nidulans)).